Here is a 162-residue protein sequence, read N- to C-terminus: Cyanate hydratase (162 aa).

Catalysis depends on residues R102, E105, and S128.

Belongs to the cyanase family.

The enzyme catalyses cyanate + hydrogencarbonate + 3 H(+) = NH4(+) + 2 CO2. Catalyzes the reaction of cyanate with bicarbonate to produce ammonia and carbon dioxide. This chain is Cyanate hydratase, found in Mycosarcoma maydis (Corn smut fungus).